The sequence spans 130 residues: Histone H2A type 1-F (130 aa).

Residues 1 to 22 (MSGRGKQGGKARAKAKTRSSRA) are disordered. Ser2 is modified (phosphoserine; by RPS6KA5). Residue Arg4 is modified to Citrulline; alternate. Symmetric dimethylarginine; by PRMT5; alternate is present on Arg4. An N6-(2-hydroxyisobutyryl)lysine; alternate modification is found at Lys6. Residue Lys6 is modified to N6-(beta-hydroxybutyryl)lysine; alternate. The span at 7–19 (QGGKARAKAKTRS) shows a compositional bias: basic residues. Residue Lys10 is modified to N6-(2-hydroxyisobutyryl)lysine. Lys10 bears the N6-lactoyllysine; alternate mark. N6-(2-hydroxyisobutyryl)lysine; alternate is present on Lys37. Position 37 is an N6-(beta-hydroxybutyryl)lysine; alternate (Lys37). The residue at position 37 (Lys37) is an N6-crotonyllysine; alternate. Residues Lys75, Lys76, and Lys96 each carry the N6-(2-hydroxyisobutyryl)lysine modification. N6-glutaryllysine; alternate is present on Lys96. N5-methylglutamine is present on Gln105. Position 119 is an N6-(2-hydroxyisobutyryl)lysine; alternate (Lys119). N6-crotonyllysine; alternate occurs at positions 119 and 120. An N6-glutaryllysine; alternate mark is found at Lys119 and Lys120. Position 120 is an N6-(beta-hydroxybutyryl)lysine; alternate (Lys120). Lys120 is covalently cross-linked (Glycyl lysine isopeptide (Lys-Gly) (interchain with G-Cter in ubiquitin); alternate). Thr121 carries the post-translational modification Phosphothreonine; by DCAF1. The residue at position 126 (Lys126) is an N6-(beta-hydroxybutyryl)lysine; alternate. An N6-crotonyllysine; alternate modification is found at Lys126. Lys126 carries the N6-glutaryllysine; alternate modification.

It belongs to the histone H2A family. The nucleosome is a histone octamer containing two molecules each of H2A, H2B, H3 and H4 assembled in one H3-H4 heterotetramer and two H2A-H2B heterodimers. The octamer wraps approximately 147 bp of DNA. Post-translationally, deiminated on Arg-4 in granulocytes upon calcium entry. In terms of processing, monoubiquitination of Lys-120 (H2AK119Ub) by RING1, TRIM37 and RNF2/RING2 complex gives a specific tag for epigenetic transcriptional repression and participates in X chromosome inactivation of female mammals. It is involved in the initiation of both imprinted and random X inactivation. Ubiquitinated H2A is enriched in inactive X chromosome chromatin. Ubiquitination of H2A functions downstream of methylation of 'Lys-27' of histone H3 (H3K27me). H2AK119Ub by RNF2/RING2 can also be induced by ultraviolet and may be involved in DNA repair. Following DNA double-strand breaks (DSBs), it is ubiquitinated through 'Lys-63' linkage of ubiquitin moieties by the E2 ligase UBE2N and the E3 ligases RNF8 and RNF168, leading to the recruitment of repair proteins to sites of DNA damage. Ubiquitination at Lys-14 and Lys-16 (H2AK13Ub and H2AK15Ub, respectively) in response to DNA damage is initiated by RNF168 that mediates monoubiquitination at these 2 sites, and 'Lys-63'-linked ubiquitin are then conjugated to monoubiquitin; RNF8 is able to extend 'Lys-63'-linked ubiquitin chains in vitro. H2AK119Ub and ionizing radiation-induced 'Lys-63'-linked ubiquitination (H2AK13Ub and H2AK15Ub) are distinct events. Phosphorylation on Ser-2 (H2AS1ph) is enhanced during mitosis. Phosphorylation on Ser-2 by RPS6KA5/MSK1 directly represses transcription. Acetylation of H3 inhibits Ser-2 phosphorylation by RPS6KA5/MSK1. Phosphorylation at Thr-121 (H2AT120ph) by DCAF1 is present in the regulatory region of many tumor suppresor genes and down-regulates their transcription. Post-translationally, symmetric dimethylation on Arg-4 by the PRDM1/PRMT5 complex may play a crucial role in the germ-cell lineage. In terms of processing, glutamine methylation at Gln-105 (H2AQ104me) by FBL is specifically dedicated to polymerase I. It is present at 35S ribosomal DNA locus and impairs binding of the FACT complex. Crotonylation (Kcr) is specifically present in male germ cells and marks testis-specific genes in post-meiotic cells, including X-linked genes that escape sex chromosome inactivation in haploid cells. Crotonylation marks active promoters and enhancers and confers resistance to transcriptional repressors. It is also associated with post-meiotically activated genes on autosomes. Post-translationally, hydroxybutyrylation of histones is induced by starvation. In terms of processing, lactylated in macrophages by EP300/P300 by using lactoyl-CoA directly derived from endogenous or exogenous lactate, leading to stimulates gene transcription.

Its subcellular location is the nucleus. The protein resides in the chromosome. Functionally, core component of nucleosome. Nucleosomes wrap and compact DNA into chromatin, limiting DNA accessibility to the cellular machineries which require DNA as a template. Histones thereby play a central role in transcription regulation, DNA repair, DNA replication and chromosomal stability. DNA accessibility is regulated via a complex set of post-translational modifications of histones, also called histone code, and nucleosome remodeling. This chain is Histone H2A type 1-F (Hist1h2af), found in Mus musculus (Mouse).